A 375-amino-acid polypeptide reads, in one-letter code: Arsenite methyltransferase (375 aa).

Serine 335 is modified (phosphoserine).

It belongs to the methyltransferase superfamily. Arsenite methyltransferase family.

It is found in the cytoplasm. Its subcellular location is the cytosol. The enzyme catalyses arsenic triglutathione + [thioredoxin]-dithiol + S-adenosyl-L-methionine + 2 H2O = methylarsonous acid + [thioredoxin]-disulfide + 3 glutathione + S-adenosyl-L-homocysteine + H(+). It carries out the reaction arsenic triglutathione + 2 [thioredoxin]-dithiol + 2 S-adenosyl-L-methionine + H2O = dimethylarsinous acid + 2 [thioredoxin]-disulfide + 3 glutathione + 2 S-adenosyl-L-homocysteine + 2 H(+). It catalyses the reaction arsenic triglutathione + 3 [thioredoxin]-dithiol + 3 S-adenosyl-L-methionine = trimethylarsine + 3 [thioredoxin]-disulfide + 3 glutathione + 3 S-adenosyl-L-homocysteine + 3 H(+). Its function is as follows. Catalyzes the transfer of a methyl group from AdoMet to trivalent arsenicals producing methylated and dimethylated arsenicals. It methylates arsenite to form methylarsonate, Me-AsO(3)H(2), which is reduced by methylarsonate reductase to methylarsonite, Me-As(OH)2. Methylarsonite is also a substrate and it is converted into the much less toxic compound dimethylarsinate (cacodylate), Me(2)As(O)-OH. The sequence is that of Arsenite methyltransferase (AS3MT) from Homo sapiens (Human).